We begin with the raw amino-acid sequence, 498 residues long: Cytochrome P450 monooxygenase 71 (498 aa).

Residues 7-24 traverse the membrane as a helical segment; the sequence is YVFALLGILATLYFVRWS. Residue Asn-425 is glycosylated (N-linked (GlcNAc...) asparagine). Residue Cys-440 coordinates heme.

This sequence belongs to the cytochrome P450 family. Heme is required as a cofactor.

The protein resides in the membrane. The protein operates within secondary metabolite biosynthesis. Functionally, cytochrome P450 monooxygenase that is able to use dehydroabietic acid and testosterone as substrates for oxidation, suggesting that the natural substrate(s) may be structurally related to steroid compounds. The chain is Cytochrome P450 monooxygenase 71 from Postia placenta (strain ATCC 44394 / Madison 698-R) (Brown rot fungus).